Consider the following 635-residue polypeptide: Sodium- and chloride-dependent creatine transporter 1 (635 aa).

The tract at residues 1-28 is disordered; sequence MAKKSAENGIYSVSGDEKKGPLIAPGPD. Residues 1–60 lie on the Cytoplasmic side of the membrane; it reads MAKKSAENGIYSVSGDEKKGPLIAPGPDGAPAKGDGPVGLGTPGGRLAVPPRETWTRQMD. Phosphothreonine is present on threonine 42. The chain crosses the membrane as a helical span at residues 61-81; it reads FIMSCVGFAVGLGNVWRFPYL. At 82-87 the chain is on the extracellular side; the sequence is CYKNGG. The helical transmembrane segment at 88-108 threads the bilayer; the sequence is GVFLIPYVLIALVGGIPIFFL. Over 109-138 the chain is Cytoplasmic; the sequence is EISLGQFMKAGSINVWNICPLFKGLGYASM. The helical transmembrane segment at 139-159 threads the bilayer; the sequence is VIVFYCNTYYIMVLAWGFYYL. Residues 160 to 230 lie on the Extracellular side of the membrane; the sequence is VKSFTTTLPW…LSGGLEVPGA (71 aa). 2 N-linked (GlcNAc...) asparagine glycosylation sites follow: asparagine 192 and asparagine 197. The helical transmembrane segment at 231–251 threads the bilayer; sequence LNWEVTLCLLACWVLVYFCVW. Topologically, residues 252 to 269 are cytoplasmic; the sequence is KGVKSTGKIVYFTATFPY. Residues 270-290 form a helical membrane-spanning segment; sequence VVLVVLLVRGVLLPGALDGII. The Extracellular segment spans residues 291 to 304; sequence YYLKPDWSKLGSPQ. Residues 305-325 traverse the membrane as a helical segment; sequence VWIDAGTQIFFSYAIGLGALT. At 326 to 341 the chain is on the cytoplasmic side; that stretch reads ALGSYNRFNNNCYKDA. A helical transmembrane segment spans residues 342 to 362; the sequence is IILALINSGTSFFAGFVVFSI. The Extracellular portion of the chain corresponds to 363–394; the sequence is LGFMAAEQGVHISKVAESGPGLAFIAYPRAVT. The helical transmembrane segment at 395–415 threads the bilayer; it reads LMPVAPLWAALFFFMLLLLGL. Residues 416-444 are Cytoplasmic-facing; it reads DSQFVGVEGFITGLLDLLPASYYFRFQRE. A helical transmembrane segment spans residues 445–465; the sequence is ISVALCCALCFVIDLSMVTDG. Topologically, residues 466-479 are extracellular; that stretch reads GMYVFQLFDYYSAS. The helical transmembrane segment at 480 to 500 threads the bilayer; that stretch reads GTTLLWQAFWECVVVAWVYGA. The Cytoplasmic segment spans residues 501–520; the sequence is DRFMDDIACMIGYRPCPWMK. The chain crosses the membrane as a helical span at residues 521–541; the sequence is WCWSFFTPLVCMGIFIFNVVY. The Extracellular segment spans residues 542-560; it reads YEPLVYNNTYVYPWWGEAM. N-linked (GlcNAc...) asparagine glycosylation occurs at asparagine 548. The helical transmembrane segment at 561 to 581 threads the bilayer; sequence GWAFALSSMLCVPLHLLGCLL. Residues 582–635 are Cytoplasmic-facing; the sequence is RAKGTMAERWQHLTQPIWGLHHLEYRAQDADVRGLTTLTPVSESSKVVVVESVM. A phosphothreonine mark is found at threonine 617 and threonine 620. At serine 623 the chain carries Phosphoserine.

This sequence belongs to the sodium:neurotransmitter symporter (SNF) (TC 2.A.22) family. SLC6A8 subfamily. Glycosylated. As to expression, predominantly expressed in skeletal muscle and kidney. Also found in brain, heart, colon, testis and prostate.

The protein resides in the cell membrane. It localises to the apical cell membrane. The enzyme catalyses creatine(out) + chloride(out) + 2 Na(+)(out) = creatine(in) + chloride(in) + 2 Na(+)(in). Its function is as follows. Creatine:sodium symporter which mediates the uptake of creatine. Plays an important role in supplying creatine to the brain via the blood-brain barrier. The protein is Sodium- and chloride-dependent creatine transporter 1 (SLC6A8) of Homo sapiens (Human).